A 166-amino-acid chain; its full sequence is METQRASLCLGRWSLWLLLLGLVVPSASAQALSYREAVLRAVDRLNEQSSEANLYRLLELDQPPKADEDPGTPKPVSFTVKETVCPRPTWRPPELCDFKENGRVKQCVGTVTLNPSNDPLDINCDEIQSVGRFRRLRKKTRKRLKKIGKVLKWIPPIVGSIPLGCG.

Positions M1–A29 are cleaved as a signal peptide. The propeptide occupies Q30 to S129. Intrachain disulfides connect C85–C96 and C107–C124.

Belongs to the cathelicidin family.

The protein resides in the secreted. In terms of biological role, exerts antimicrobial activity against both Gram-positive and negative bacteria. Its activity appears to be mediated by its ability to damage bacterial membranes. The chain is Antibacterial peptide PMAP-36 (PMAP36) from Sus scrofa (Pig).